Consider the following 657-residue polypeptide: Serine/threonine kinase NLK (657 aa).

One can recognise a Protein kinase domain in the interval 208–554 (SQPDRPIGYG…VEEALSHPYL (347 aa)). Residues 214–222 (IGYGAFGVV) and K237 each bind ATP. The Proton acceptor role is filled by D391.

Belongs to the protein kinase superfamily. Ser/Thr protein kinase family. As to quaternary structure, component of the beta-catenin-lit-1 complex (also called the lit-1/wrm-1 complex or the wrm-1/lit-1 kinase complex) at least composed of lit-1 and wrm-1. Interacts with wrm-1 (via N-terminus); the interaction is direct and activates lit-1 kinase activity which leads to the phosphorylation of pop-1. This promotes pop-1 interaction with par-5 and translocation of pop-1 from the nucleus to the cytoplasm. Interacts with pop-1 (when phosphorylated on 'Ser-125'); the interaction is dependent on the beta-catenin-lit-1 complex. Requires Mg(2+) as cofactor.

It localises to the cytoplasm. It is found in the cell cortex. The protein localises to the nucleus. It carries out the reaction L-seryl-[protein] + ATP = O-phospho-L-seryl-[protein] + ADP + H(+). The catalysed reaction is L-threonyl-[protein] + ATP = O-phospho-L-threonyl-[protein] + ADP + H(+). Its function is as follows. Has a role in the Wnt signaling pathway controlling the asymmetry of cell divisions during embryogenesis. Operates in the AB and EMS cell lineages influencing cell specification. Required for body wall muscle development, endoderm development, pop-1 asymmetry and T-cell division asymmetry. Component of the beta-catenin-lit-1 complex which promotes the phosphorylation, down-regulation and subcellular relocation of pop-1. Regulates plp-1 nuclear localization in embryos. Plays a role in male tail tip morphogenesis. In Caenorhabditis briggsae, this protein is Serine/threonine kinase NLK.